The primary structure comprises 504 residues: Maturase K (504 aa).

The protein belongs to the intron maturase 2 family. MatK subfamily.

The protein localises to the plastid. The protein resides in the chloroplast. Functionally, usually encoded in the trnK tRNA gene intron. Probably assists in splicing its own and other chloroplast group II introns. In Arabidopsis lyrata (Lyre-leaved rock-cress), this protein is Maturase K.